A 1051-amino-acid chain; its full sequence is Protein transport protein Sec16B (1051 aa).

Residues M1–L23 show a composition bias toward polar residues. The interval M1–P109 is disordered. Residues D39–Q63 are compositionally biased toward basic and acidic residues. The segment covering S64–V77 has biased composition (polar residues). Residues S70 and S137 each carry the phosphoserine modification. Residues E157–K203 are disordered. Polar residues predominate over residues F163–N177. S182, S185, and S245 each carry phosphoserine. Residues A263–T708 are central conserved domain (CCD); required for localization to endoplasmic reticulum exit sites. Residues L703 to D715 are compositionally biased toward basic and acidic residues. Disordered stretches follow at residues L703–T754, S798–L820, and T850–C1051. Residues G737–T754 show a composition bias toward polar residues. The span at S798 to G809 shows a compositional bias: low complexity. T850 carries the phosphothreonine modification. S860, S863, S866, S874, and S875 each carry phosphoserine. Residues G877–N897 are compositionally biased toward basic and acidic residues. A compositionally biased stretch (low complexity) spans S900–S920. Over residues G921–E932 the composition is skewed to acidic residues. Residues R936–L947 are compositionally biased toward low complexity. The segment covering E984–G993 has biased composition (gly residues). Over residues N1022 to R1037 the composition is skewed to polar residues.

Belongs to the SEC16 family. SEC16A and SEC16B are each present in multiple copies in a heteromeric complex. Interacts with TFG. Interacts with SEC13. In terms of tissue distribution, liver.

The protein resides in the endoplasmic reticulum membrane. It is found in the golgi apparatus membrane. Its function is as follows. Plays a role in the organization of the endoplasmic reticulum exit sites (ERES), also known as transitional endoplasmic reticulum (tER). Required for secretory cargo traffic from the endoplasmic reticulum to the Golgi apparatus. Involved in peroxisome biogenesis. Regulates the transport of peroxisomal biogenesis factors PEX3 and PEX16 from the ER to peroxisomes. This Mus musculus (Mouse) protein is Protein transport protein Sec16B (Sec16b).